We begin with the raw amino-acid sequence, 399 residues long: 1-deoxy-D-xylulose 5-phosphate reductoisomerase (399 aa).

NADPH is bound by residues Thr13, Gly14, Ser15, Ile16, and Asn127. Lys128 is a binding site for 1-deoxy-D-xylulose 5-phosphate. Glu129 contributes to the NADPH binding site. Mn(2+) is bound at residue Asp153. Residues Ser154, Glu155, Ser187, and His210 each contribute to the 1-deoxy-D-xylulose 5-phosphate site. Mn(2+) is bound at residue Glu155. Gly216 serves as a coordination point for NADPH. Ser223, Asn228, Lys229, and Glu232 together coordinate 1-deoxy-D-xylulose 5-phosphate. Glu232 contributes to the Mn(2+) binding site.

The protein belongs to the DXR family. Mg(2+) is required as a cofactor. It depends on Mn(2+) as a cofactor.

The catalysed reaction is 2-C-methyl-D-erythritol 4-phosphate + NADP(+) = 1-deoxy-D-xylulose 5-phosphate + NADPH + H(+). It functions in the pathway isoprenoid biosynthesis; isopentenyl diphosphate biosynthesis via DXP pathway; isopentenyl diphosphate from 1-deoxy-D-xylulose 5-phosphate: step 1/6. Catalyzes the NADPH-dependent rearrangement and reduction of 1-deoxy-D-xylulose-5-phosphate (DXP) to 2-C-methyl-D-erythritol 4-phosphate (MEP). The protein is 1-deoxy-D-xylulose 5-phosphate reductoisomerase of Bordetella avium (strain 197N).